Reading from the N-terminus, the 83-residue chain is Short neurotoxin NCA-02/NCA-05/UER-05 (83 aa).

The first 21 residues, 1–21, serve as a signal peptide directing secretion; the sequence is MKTLLLTLVVVTMVCLDLGYT. 4 disulfides stabilise this stretch: cysteine 24/cysteine 45, cysteine 38/cysteine 62, cysteine 64/cysteine 75, and cysteine 76/cysteine 81.

It belongs to the three-finger toxin family. Short-chain subfamily. Type I alpha-neurotoxin sub-subfamily. Expressed by the venom gland.

Its subcellular location is the secreted. Its function is as follows. Binds to muscle nicotinic acetylcholine receptor (nAChR) and inhibit acetylcholine from binding to the receptor, thereby impairing neuromuscular transmission. The protein is Short neurotoxin NCA-02/NCA-05/UER-05 of Laticauda colubrina (Yellow-lipped sea krait).